The primary structure comprises 122 residues: Large ribosomal subunit protein uL14 (122 aa).

Belongs to the universal ribosomal protein uL14 family. Part of the 50S ribosomal subunit. Forms a cluster with proteins L3 and L19. In the 70S ribosome, L14 and L19 interact and together make contacts with the 16S rRNA in bridges B5 and B8.

Binds to 23S rRNA. Forms part of two intersubunit bridges in the 70S ribosome. The chain is Large ribosomal subunit protein uL14 from Roseiflexus castenholzii (strain DSM 13941 / HLO8).